We begin with the raw amino-acid sequence, 723 residues long: MSVMPSNLSLNGTSFFAENHSIMDKPNEQRTLNVFLFCSTFIIAFTVLLGSIYSLVSLLKLQNKSTISMIVTSLSIDDLISIVPVIIFMLTQWSSDALPQPLCTTSALIYLFQGISSNLKGSLIVSYNFYSINKTETMNCSASKRRVSMVWAILSIWIVSLLICILPLCGWGKYIPTTWGCFTDHASSYILFLFIVYSLCFCLLTVLSVPLTYQLLCSDEQQLLHVNYQEISRGYITPGTPAGCSTATPCLSPVDPVDKTLKHFQNACLSSKAVFRKGVAESSGLEPRCMNNAKSRSFTVGFAQKRFSLILALTKVILWLPMMIQMVVQHITGYQSFSFETLSFLLTLLAATVTPVFVLSEHWIHLPCGCIINCRRNSYAVSSEELKTKHRGFEFNLSFQHGYGIYRISPESHHHDGDGKSTSCHNLLVCEKPYEPPRGGGGGAALAELSTTDSARPGPAGLSATDSARPGPAGFSTTDSARPSAAGVRGEAASGLGRTVEGPERRLSHEEGHKPELTDWEWCRSKSERTPRQRSGGALAIPLCAFQGTVSLQAPTGKTLSLSTYEVSTEGQKITPTSKKIEVYRSKSVGHDPNPEECPNTFADTSVKIHLEVLEICDNEEALDTVSIISNISQSSTQVRSPSLRYSRKENRFVSCDLGETASYSLFIPSNNPDSDINITIPDTVEAHRQNSKKQHMERGGYQEEIQMLNKAYRKREEDGNSN.

The Extracellular segment spans residues 1 to 31; it reads MSVMPSNLSLNGTSFFAENHSIMDKPNEQRT. Asn7, Asn11, and Asn19 each carry an N-linked (GlcNAc...) asparagine glycan. A helical transmembrane segment spans residues 32-52; it reads LNVFLFCSTFIIAFTVLLGSI. Topologically, residues 53–69 are cytoplasmic; the sequence is YSLVSLLKLQNKSTISM. The chain crosses the membrane as a helical span at residues 70–90; sequence IVTSLSIDDLISIVPVIIFML. At 91–106 the chain is on the extracellular side; the sequence is TQWSSDALPQPLCTTS. A disulfide bond links Cys103 and Cys181. The chain crosses the membrane as a helical span at residues 107-127; sequence ALIYLFQGISSNLKGSLIVSY. At 128–148 the chain is on the cytoplasmic side; the sequence is NFYSINKTETMNCSASKRRVS. The helical transmembrane segment at 149–169 threads the bilayer; sequence MVWAILSIWIVSLLICILPLC. The Extracellular portion of the chain corresponds to 170-188; that stretch reads GWGKYIPTTWGCFTDHASS. Residues 189–209 form a helical membrane-spanning segment; the sequence is YILFLFIVYSLCFCLLTVLSV. At 210–306 the chain is on the cytoplasmic side; it reads PLTYQLLCSD…SFTVGFAQKR (97 aa). Residues 307–327 traverse the membrane as a helical segment; sequence FSLILALTKVILWLPMMIQMV. Residues 328-338 lie on the Extracellular side of the membrane; it reads VQHITGYQSFS. The chain crosses the membrane as a helical span at residues 339–359; that stretch reads FETLSFLLTLLAATVTPVFVL. Topologically, residues 360–723 are cytoplasmic; it reads SEHWIHLPCG…RKREEDGNSN (364 aa). The segment at 451-513 is disordered; that stretch reads TTDSARPGPA…ERRLSHEEGH (63 aa). Residues 501–513 are compositionally biased toward basic and acidic residues; it reads EGPERRLSHEEGH.

The protein belongs to the G-protein coupled receptor 1 family. In terms of tissue distribution, specific expression in peripheral nervous system, including nerve growth factor-dependent sensory and sympathetic neurons, as well as enteric neurons.

It is found in the cell membrane. Orphan receptor. The protein is Probable G-protein coupled receptor 149 (GPR149) of Gallus gallus (Chicken).